A 269-amino-acid chain; its full sequence is Protein BASIC PENTACYSTEINE3 (269 aa).

This sequence belongs to the BBR/BPC family. Expressed in seedlings, leaves and pistils. Detected in the base of flowers and tips of carpels, in petal vasculature, in anthers, in young rosette, in the lateral and primary roots, and in the gynobasal portion of the ovule.

It localises to the nucleus. In terms of biological role, transcriptional regulator that specifically binds to GA-rich elements (GAGA-repeats) present in regulatory sequences of genes involved in developmental processes. The polypeptide is Protein BASIC PENTACYSTEINE3 (BPC3) (Arabidopsis thaliana (Mouse-ear cress)).